The primary structure comprises 406 residues: Arginine deiminase (406 aa).

Cys-396 functions as the Amidino-cysteine intermediate in the catalytic mechanism.

Belongs to the arginine deiminase family.

Its subcellular location is the cytoplasm. The catalysed reaction is L-arginine + H2O = L-citrulline + NH4(+). The protein operates within amino-acid degradation; L-arginine degradation via ADI pathway; carbamoyl phosphate from L-arginine: step 1/2. The sequence is that of Arginine deiminase from Vibrio campbellii (strain ATCC BAA-1116).